We begin with the raw amino-acid sequence, 230 residues long: uncharacterized protein (230 aa).

This is an uncharacterized protein from Dictyostelium discoideum (Social amoeba).